Reading from the N-terminus, the 450-residue chain is Tubulin beta-2 chain (450 aa).

GTP is bound by residues Gln11, Glu69, Ser138, Gly142, Thr143, Gly144, Asn204, and Asn226. Glu69 is a binding site for Mg(2+). The interval 428–450 (ATAEDDVDGYAEGEAGETYESEQ) is disordered. A compositionally biased stretch (acidic residues) spans 429-450 (TAEDDVDGYAEGEAGETYESEQ).

It belongs to the tubulin family. As to quaternary structure, dimer of alpha and beta chains. A typical microtubule is a hollow water-filled tube with an outer diameter of 25 nm and an inner diameter of 15 nm. Alpha-beta heterodimers associate head-to-tail to form protofilaments running lengthwise along the microtubule wall with the beta-tubulin subunit facing the microtubule plus end conferring a structural polarity. Microtubules usually have 13 protofilaments but different protofilament numbers can be found in some organisms and specialized cells. Requires Mg(2+) as cofactor. In terms of processing, cleaved by caspase ced-3 in vitro.

It is found in the cytoplasm. The protein localises to the cytoskeleton. Its function is as follows. Tubulin is the major constituent of microtubules, a cylinder consisting of laterally associated linear protofilaments composed of alpha- and beta-tubulin heterodimers. Microtubules grow by the addition of GTP-tubulin dimers to the microtubule end, where a stabilizing cap forms. Below the cap, tubulin dimers are in GDP-bound state, owing to GTPase activity of alpha-tubulin. Required for the normal dynamic behavior of the non-centrosomal microtubules in the epidermal syncytium. Involved in the redistribution of microtubule end-binding protein EB1/ebp-2 caused by wounding. Required to modulate expression in the epidermis of antimicrobial peptides, such as nlp-29, after wounding, or fungal infection. The protein is Tubulin beta-2 chain (tbb-2) of Caenorhabditis elegans.